The sequence spans 166 residues: Ubiquitin-conjugating enzyme E2-18 kDa (166 aa).

Residues 5 to 165 enclose the UBC core domain; sequence MALRRLMKEY…VRRLARKTLG (161 aa). Catalysis depends on Cys90, which acts as the Glycyl thioester intermediate. Cys90 is covalently cross-linked (Glycyl cysteine thioester (Cys-Gly) (interchain with G-Cter in ubiquitin)).

Belongs to the ubiquitin-conjugating enzyme family. Autoubiquitinated at Cys-90; undergoes 'Lys-48'-linked polyubiquitination, which leads to proteasome-dependent protein degradation.

The enzyme catalyses S-ubiquitinyl-[E1 ubiquitin-activating enzyme]-L-cysteine + [E2 ubiquitin-conjugating enzyme]-L-cysteine = [E1 ubiquitin-activating enzyme]-L-cysteine + S-ubiquitinyl-[E2 ubiquitin-conjugating enzyme]-L-cysteine.. Its pathway is protein modification; protein ubiquitination. In terms of biological role, catalyzes the covalent attachment of ubiquitin to other proteins. Functions in degradation of misfolded or regulated proteins localized in the endoplasmic reticulum (ER) lumen or membrane via the ubiquitin-proteasome system. Cognate E2 conjugating enzyme for the doa10 ubiquitin ligase complex, which is part of the ERAD-C pathway responsible for the rapid degradation of membrane proteins with misfolded cytoplasmic domains, and of the hrd1 ubiquitin ligase complex, which is part of the ERAD-L and ERAD-M pathways responsible for the rapid degradation of soluble lumenal and membrane proteins with misfolded lumenal domains (ERAD-L), or ER-membrane proteins with misfolded transmembrane domains (ERAD-M). Together with hrd1, required for the degradation of the transcription factor sre1 precursor in the absence of its binding partner scp1. Has a role in the formation of chromatin structures that influence the localization of transcriptional silencing factors. The sequence is that of Ubiquitin-conjugating enzyme E2-18 kDa (ubc7) from Schizosaccharomyces pombe (strain 972 / ATCC 24843) (Fission yeast).